The chain runs to 374 residues: Transcription factor IIIA (374 aa).

7 consecutive C2H2-type zinc fingers follow at residues 23 to 47, 53 to 77, 83 to 107, 113 to 138, 144 to 169, 204 to 226, and 236 to 261; these read FHCP…LRTH, FVCD…KRCH, FSCH…IEVH, YACT…SACH, YPCT…NRAH, PSCS…VVLH, and YHCP…SVIH. A C2H2-type 8; atypical zinc finger spans residues 267–291; sequence FHCDSCGTKFGYKHMLQRHLERGTC. A C2H2-type 9 zinc finger spans residues 349 to 374; sequence YSCSFPECNYRFKRLYDMHRHLNSHH.

The protein localises to the nucleus. Functionally, is required for correct transcription of 5S RNA genes by RNA polymerase III. Also binds the transcribed 5S RNA's. Initiates transcription of the 5S ribosomal RNA gene. This Schizosaccharomyces pombe (strain 972 / ATCC 24843) (Fission yeast) protein is Transcription factor IIIA (sfc2).